The primary structure comprises 203 residues: Probable flagellin 1 (203 aa).

Residues 1–11 (MGMRFLKNEKG) constitute a propeptide that is removed on maturation.

The protein belongs to the archaeal flagellin family.

It is found in the archaeal flagellum. In terms of biological role, flagellin is the subunit protein which polymerizes to form the filaments of archaeal flagella. This Archaeoglobus fulgidus (strain ATCC 49558 / DSM 4304 / JCM 9628 / NBRC 100126 / VC-16) protein is Probable flagellin 1 (flaB1).